Here is a 279-residue protein sequence, read N- to C-terminus: 2'-N-acetylparomamine deacetylase (279 aa).

Zn(2+)-binding residues include His-31, Asp-34, and His-157. The segment at 245 to 279 (PRRWTGGTAGAGHAAGRRGAPHTERVWTPAPAGAR) is disordered. A compositionally biased stretch (low complexity) spans 246-258 (RRWTGGTAGAGHA).

It belongs to the PIGL family. Zn(2+) is required as a cofactor.

The catalysed reaction is 2'-N-acetylparomamine + H2O = paromamine + acetate. It carries out the reaction 2'''-acetyl-6'''-hydroxyneomycin C + H2O = 6'''-deamino-6'''-hydroxyneomycin C + acetate. The protein operates within antibiotic biosynthesis; neomycin biosynthesis. Deacetylase involved in the biosynthesis of neomycin by mediating 2 steps of the pathway. Deacetylates both 2'-N-acetylparomamine and 2'''-acetyl-6'''-hydroxyneomycin C. This chain is 2'-N-acetylparomamine deacetylase (neoL), found in Streptomyces fradiae (Streptomyces roseoflavus).